We begin with the raw amino-acid sequence, 200 residues long: Protein GrpE (200 aa).

Residues methionine 1–asparagine 25 show a composition bias toward basic and acidic residues. The interval methionine 1–glutamate 52 is disordered.

This sequence belongs to the GrpE family. As to quaternary structure, homodimer.

The protein resides in the cytoplasm. Functionally, participates actively in the response to hyperosmotic and heat shock by preventing the aggregation of stress-denatured proteins, in association with DnaK and GrpE. It is the nucleotide exchange factor for DnaK and may function as a thermosensor. Unfolded proteins bind initially to DnaJ; upon interaction with the DnaJ-bound protein, DnaK hydrolyzes its bound ATP, resulting in the formation of a stable complex. GrpE releases ADP from DnaK; ATP binding to DnaK triggers the release of the substrate protein, thus completing the reaction cycle. Several rounds of ATP-dependent interactions between DnaJ, DnaK and GrpE are required for fully efficient folding. The sequence is that of Protein GrpE from Legionella pneumophila subsp. pneumophila (strain Philadelphia 1 / ATCC 33152 / DSM 7513).